The primary structure comprises 142 residues: Mediator of RNA polymerase II transcription subunit 9 (142 aa).

The interval 1–58 (MASSGVAGGRQAEDTLQPPPELLPESKPPPPPQPLPVAALPPPAAPRPQSPAGAKEEN) is disordered. Residue A2 is modified to N-acetylalanine. Residues 17 to 49 (QPPPELLPESKPPPPPQPLPVAALPPPAAPRPQ) are compositionally biased toward pro residues. Residues 78-134 (DLHQDLNALKTKFQELRKLIGTMPGIHVSPEQQQQQLHSLREQVRTKNELLQKYKSL) are a coiled coil. A Phosphoserine modification is found at S106.

Belongs to the Mediator complex subunit 9 family. In terms of assembly, component of the Mediator complex, which is composed of MED1, MED4, MED6, MED7, MED8, MED9, MED10, MED11, MED12, MED13, MED13L, MED14, MED15, MED16, MED17, MED18, MED19, MED20, MED21, MED22, MED23, MED24, MED25, MED26, MED27, MED29, MED30, MED31, CCNC, CDK8 and CDC2L6/CDK11. The MED12, MED13, CCNC and CDK8 subunits form a distinct module termed the CDK8 module. Mediator containing the CDK8 module is less active than Mediator lacking this module in supporting transcriptional activation. Individual preparations of the Mediator complex lacking one or more distinct subunits have been variously termed ARC, CRSP, DRIP, PC2, SMCC and TRAP.

It localises to the nucleus. In terms of biological role, component of the Mediator complex, a coactivator involved in the regulated transcription of nearly all RNA polymerase II-dependent genes. Mediator functions as a bridge to convey information from gene-specific regulatory proteins to the basal RNA polymerase II transcription machinery. Mediator is recruited to promoters by direct interactions with regulatory proteins and serves as a scaffold for the assembly of a functional preinitiation complex with RNA polymerase II and the general transcription factors. The protein is Mediator of RNA polymerase II transcription subunit 9 (Med9) of Mus musculus (Mouse).